We begin with the raw amino-acid sequence, 230 residues long: MKIGIIGAMEPEVAHLIQSLTSAEHSLIAGIEFISGQIAGKDVVITRSGIGKVAASIATTLLIEKFAVTQVVNTGSAGGFVDSLKIGDIVISSEVRHHDVDVTAFGYEIGQMAQQPAAFIPDAALVEAAKKAVSALGEVKAIEGLICTGDSFICDPERTKVMRANFPTMAACEMEGAAIAQVCHQFKVPFVVIRSLSDNANNDSPVDFDSYIIKAGHHSAMMVVALLTEL.

The active-site Proton acceptor is the glutamate 12. Substrate-binding positions include glycine 78, isoleucine 153, and 174–175 (ME). The active-site Proton donor is aspartate 198.

The protein belongs to the PNP/UDP phosphorylase family. MtnN subfamily.

It catalyses the reaction S-adenosyl-L-homocysteine + H2O = S-(5-deoxy-D-ribos-5-yl)-L-homocysteine + adenine. The enzyme catalyses S-methyl-5'-thioadenosine + H2O = 5-(methylsulfanyl)-D-ribose + adenine. The catalysed reaction is 5'-deoxyadenosine + H2O = 5-deoxy-D-ribose + adenine. It functions in the pathway amino-acid biosynthesis; L-methionine biosynthesis via salvage pathway; S-methyl-5-thio-alpha-D-ribose 1-phosphate from S-methyl-5'-thioadenosine (hydrolase route): step 1/2. Catalyzes the irreversible cleavage of the glycosidic bond in both 5'-methylthioadenosine (MTA) and S-adenosylhomocysteine (SAH/AdoHcy) to adenine and the corresponding thioribose, 5'-methylthioribose and S-ribosylhomocysteine, respectively. Also cleaves 5'-deoxyadenosine, a toxic by-product of radical S-adenosylmethionine (SAM) enzymes, into 5-deoxyribose and adenine. This chain is 5'-methylthioadenosine/S-adenosylhomocysteine nucleosidase, found in Shewanella denitrificans (strain OS217 / ATCC BAA-1090 / DSM 15013).